An 81-amino-acid polypeptide reads, in one-letter code: Large ribosomal subunit protein uL23 (81 aa).

This sequence belongs to the universal ribosomal protein uL23 family. In terms of assembly, part of the 50S ribosomal subunit. Contacts protein L29.

Its function is as follows. Binds to 23S rRNA. One of the proteins that surrounds the polypeptide exit tunnel on the outside of the ribosome. The protein is Large ribosomal subunit protein uL23 of Saccharolobus solfataricus (strain ATCC 35092 / DSM 1617 / JCM 11322 / P2) (Sulfolobus solfataricus).